A 27-amino-acid chain; its full sequence is Caerulein precursor fragment R2 (27 aa).

Expressed by the skin glands.

The protein localises to the secreted. Functionally, antimicrobial peptide. This is Caerulein precursor fragment R2 from Xenopus ruwenzoriensis (Uganda clawed frog).